The following is an 85-amino-acid chain: uncharacterized protein (85 aa).

It belongs to the ycf76 family.

Its subcellular location is the plastid. The protein localises to the chloroplast. This is an uncharacterized protein from Oryza sativa subsp. japonica (Rice).